A 315-amino-acid chain; its full sequence is Acetaldehyde dehydrogenase (315 aa).

13–16 (SGNI) provides a ligand contact to NAD(+). The active-site Acyl-thioester intermediate is Cys-131. NAD(+) is bound by residues 163–171 (SAGPGTRAN) and Asn-290.

The protein belongs to the acetaldehyde dehydrogenase family.

It carries out the reaction acetaldehyde + NAD(+) + CoA = acetyl-CoA + NADH + H(+). The polypeptide is Acetaldehyde dehydrogenase (Xanthobacter autotrophicus (strain ATCC BAA-1158 / Py2)).